The sequence spans 1285 residues: Peroxidasin homolog pxn-1 (1285 aa).

Positions 1-20 (MNLYLLLLVIATSSWQFVAG) are cleaved as a signal peptide. In terms of domain architecture, LRRNT spans 21–53 (LECPVECTCDKKGLVVDCSSSGLTRIPKNISRN). LRR repeat units lie at residues 27–49 (CTCD…IPKN), 50–72 (ISRN…RSDL), 73–96 (EGFN…ENVL), 97–120 (DHLP…PLCS), 122–143 (SRPL…EQVL), 145–168 (YFPD…KLFD), and 204–227 (KVYC…SALT). N-linked (GlcNAc...) asparagine glycosylation is present at N49. The 49-residue stretch at 180 to 228 (SNPWHCDCRASKVKALLQKVKWEKKVYCTNPVELRHQALDEVDDSALTC) folds into the LRRCT domain. N248 carries an N-linked (GlcNAc...) asparagine glycan. Positions 305–324 (RQSQHQGNGSPQFTYKPRDN) are disordered. The segment covering 307–317 (SQHQGNGSPQF) has biased composition (polar residues). 2 Ig-like C2-type domains span residues 315–401 (PQFT…FSLD) and 408–495 (PNIY…AKLT). Disulfide bonds link C336–C385 and C429–C479. A coiled-coil region spans residues 508-550 (QIDEELLRAIAQKARQNVENAVEKTRKQLTQDKVTNTNDLKRL). Residue N595 is glycosylated (N-linked (GlcNAc...) asparagine). C625 and C641 form a disulfide bridge. D719 contacts heme b. Residue H720 is the Proton acceptor of the active site. Position 721 (D721) interacts with Ca(2+). 2 disulfide bridges follow: C740-C750 and C744-C771. N741 carries an N-linked (GlcNAc...) asparagine glycan. Residues T803, F805, D807, and S809 each contribute to the Ca(2+) site. Residue N858 is glycosylated (N-linked (GlcNAc...) asparagine). Heme b contacts are provided by E877 and H973. LRR repeat units follow at residues 998-1022 (HKAF…GLFA) and 1049-1073 (VSLD…TEYR). 2 disulfide bridges follow: C1076-C1133 and C1174-C1201. One copy of the LRR 12 repeat lies at 1168–1189 (TLARLFCDNGDNIDRIQKDVFM).

It belongs to the peroxidase family. XPO subfamily. The cofactor is Ca(2+). Heme b is required as a cofactor. As to expression, expressed in the ventral nerve cord, the dorsal nerve cord, head neurons, GABAergic and cholinergic neurons, body wall muscles, vulval muscles, uterine muscles, intestine, the hypodermis and in coelomocytes.

It is found in the secreted. It localises to the extracellular space. The protein resides in the extracellular matrix. It catalyses the reaction L-lysyl-[collagen] + L-methionyl-[collagen] + H2O2 = [collagen]-L-lysyl-N-S-L-methionyl-[collagen] + 2 H2O + H(+). The catalysed reaction is bromide + H2O2 = hypobromite + H2O. It carries out the reaction L-lysyl-[collagen] + L-methionyl-[collagen] + hypobromite = [collagen]-L-lysyl-N-S-L-methionyl-[collagen] + bromide + H2O + H(+). The enzyme catalyses L-tyrosyl-[protein] + bromide + H2O2 + H(+) = 3-bromo-L-tyrosyl-[protein] + 2 H2O. It catalyses the reaction hypobromite + L-tyrosyl-[protein] + H(+) = 3-bromo-L-tyrosyl-[protein] + H2O. In terms of biological role, catalyzes the two-electron oxidation of bromide by hydrogen peroxide and generates hypobromite as a reactive intermediate which mediates the formation of sulfilimine cross-links between methionine and hydroxylysine residues within an uncross-linked collagen IV NC1 hexamer. Plays a role in the attachment of tissues and in axonal guidance during early developmental stages. May functionally antagonize the peroxidasin pxn-2 to maintain neuronal development. The protein is Peroxidasin homolog pxn-1 of Caenorhabditis elegans.